A 1157-amino-acid chain; its full sequence is Probable inactive leucine-rich repeat receptor kinase XIAO (1157 aa).

A signal peptide spans 1–21 (MPPPPRLLFLLVMLLVVAAPG). The N-linked (GlcNAc...) asparagine glycan is linked to asparagine 58. LRR repeat units follow at residues 101 to 125 (LVYL…LSRI), 127 to 149 (SLRA…FLAN), 150 to 172 (LTNL…VSFP), 173 to 196 (PSLK…VSAS), 198 to 220 (TSLQ…SLGT), 221 to 245 (LQDL…LSNC), 247 to 269 (ALLH…VAAI), 270 to 293 (PSLQ…AFGG), 296 to 319 (NSSL…VSLG), 320 to 343 (KDLQ…LAGA), 344 to 367 (GGLT…VGQL), 368 to 391 (TALQ…IGRC), 393 to 414 (ALQV…ALGG), 415 to 439 (LRRL…LGNL), 440 to 463 (SWLE…LFVL), 464 to 487 (GNLT…IGNL), 489 to 511 (ALQS…IGNL), 513 to 536 (NLRV…LFGL), 537 to 559 (PQLQ…GFSS), 561 to 583 (WSLR…TYGY), 584 to 608 (LPSL…LANC), 609 to 631 (SNLT…DFAR), 632 to 656 (LGEL…ISNC), 658 to 680 (SLVT…LSNL), 681 to 704 (SKLQ…LAQI), and 706 to 728 (GMLS…LGSR). Asparagine 149 is a glycosylation site (N-linked (GlcNAc...) asparagine). 3 N-linked (GlcNAc...) asparagine glycosylation sites follow: asparagine 192, asparagine 204, and asparagine 244. Asparagine 296 carries an N-linked (GlcNAc...) asparagine glycan. Asparagine 438 is a glycosylation site (N-linked (GlcNAc...) asparagine). Asparagine 465, asparagine 494, and asparagine 524 each carry an N-linked (GlcNAc...) asparagine glycan. Residues asparagine 567, asparagine 607, asparagine 610, asparagine 655, asparagine 679, asparagine 692, and asparagine 711 are each glycosylated (N-linked (GlcNAc...) asparagine). Residues 765-785 (LALLIGVVAATVLLLVLFCCC) form a helical membrane-spanning segment. A disordered region spans residues 804–825 (VKKRRRSPGRGSGSSGTSTDSV). In terms of domain architecture, Protein kinase spans 849–1144 (FDEENVLSRG…LEGCRVGPDI (296 aa)). ATP contacts are provided by residues 855–863 (LSRGRHGLV), 930–932 (DYM), 936–939 (NLAT), 980–985 (DVKPQN), and aspartate 998.

It belongs to the protein kinase superfamily. Ser/Thr protein kinase family. Expressed in developing culm, coleoptile, primary root, young spikelet, young leaf blade and leaf sheath, floral meristem primordia, stamen primordia, and lemma and palea primordia.

The protein localises to the cell membrane. Its function is as follows. Functions in the early stages of organ development by regulating cell division rate. Is probably involved in the regulation of a number of cell-cycle genes. May act as regulator of brassinosteroid (BR) signaling and cell-cycle controlling organ growth. The polypeptide is Probable inactive leucine-rich repeat receptor kinase XIAO (Oryza sativa subsp. japonica (Rice)).